A 40-amino-acid chain; its full sequence is Dolichyl-diphosphooligosaccharide--protein glycosyltransferase subunit 4 (40 aa).

The Lumenal portion of the chain corresponds to 1 to 4; the sequence is MITD. The helical transmembrane segment at 5-25 threads the bilayer; the sequence is VQLAIFSNVLGVFLFLLVVAY. Topologically, residues 26–40 are cytoplasmic; the sequence is HYINANTGKPSAKAK.

The protein belongs to the OST4 family. In terms of assembly, component of the oligosaccharyltransferase (OST) complex.

Its subcellular location is the endoplasmic reticulum membrane. In terms of biological role, subunit of the oligosaccharyl transferase (OST) complex that catalyzes the initial transfer of a defined glycan (Glc(3)Man(9)GlcNAc(2) in eukaryotes) from the lipid carrier dolichol-pyrophosphate to an asparagine residue within an Asn-X-Ser/Thr consensus motif in nascent polypeptide chains, the first step in protein N-glycosylation. N-glycosylation occurs cotranslationally and the complex associates with the Sec61 complex at the channel-forming translocon complex that mediates protein translocation across the endoplasmic reticulum (ER). All subunits are required for a maximal enzyme activity. The sequence is that of Dolichyl-diphosphooligosaccharide--protein glycosyltransferase subunit 4 from Drosophila erecta (Fruit fly).